Reading from the N-terminus, the 122-residue chain is Small ribosomal subunit protein uS12c (122 aa).

This sequence belongs to the universal ribosomal protein uS12 family. In terms of assembly, part of the 30S ribosomal subunit.

Its subcellular location is the plastid. The protein localises to the chloroplast. With S4 and S5 plays an important role in translational accuracy. Located at the interface of the 30S and 50S subunits. This Mesostigma viride (Green alga) protein is Small ribosomal subunit protein uS12c (rps12).